A 303-amino-acid chain; its full sequence is uncharacterized protein (303 aa).

This is an uncharacterized protein from Leptospira interrogans.